The primary structure comprises 119 residues: UPF0292 protein TV1259 (119 aa).

Positions 11 to 93 (SIPIIVEGRN…YVDLYLWNFI (83 aa)) constitute a Toprim domain. Mg(2+) is bound by residues E17, D62, and D64.

This sequence belongs to the UPF0292 family. It depends on Mg(2+) as a cofactor.

In Thermoplasma volcanium (strain ATCC 51530 / DSM 4299 / JCM 9571 / NBRC 15438 / GSS1), this protein is UPF0292 protein TV1259.